The sequence spans 345 residues: Selenide, water dikinase (345 aa).

The active site involves C15. ATP is bound by residues K18 and 46–48; that span reads SKD. A Mg(2+)-binding site is contributed by D49. Residues D66, D89, and 137–139 contribute to the ATP site; that span reads GHS. A Mg(2+)-binding site is contributed by D89. Residue D225 participates in Mg(2+) binding.

It belongs to the selenophosphate synthase 1 family. Class I subfamily. Homodimer. Requires Mg(2+) as cofactor.

It catalyses the reaction hydrogenselenide + ATP + H2O = selenophosphate + AMP + phosphate + 2 H(+). Its function is as follows. Synthesizes selenophosphate from selenide and ATP. The protein is Selenide, water dikinase of Aeromonas hydrophila subsp. hydrophila (strain ATCC 7966 / DSM 30187 / BCRC 13018 / CCUG 14551 / JCM 1027 / KCTC 2358 / NCIMB 9240 / NCTC 8049).